The sequence spans 349 residues: MAEAEYFIWIAPEGDFEEEFGNITRMLPTGEYFSPCKRVPMTNRQAVVVFYALVFLLSLLGNSLVMLVILYRRRTRSVTDVYVLNLAIADLLFSLTLPFLAVSKWKGWIFGTPLCKMVSLLKEVNFFSGILLLACISVDRYLAIVHATRTLTRKRYLVKFVCMGTWGLSLVLSLPFAIFRQAYKPYRSGTVCYEVLGEATADLRITLRGLSHIFGFLLPLFIMLVCYGLTLRTLFKAHMRQKRRAMWVIFAVVLVFLLCCLPYNLVLLSDTLLGAHLIQDTCERRNNIDQALYITEILGFSHSCLNPVIYAFVGQSFRHEFLKILANLVHKEVLTHHSASFRTSLTTIY.

Topologically, residues 1–44 (MAEAEYFIWIAPEGDFEEEFGNITRMLPTGEYFSPCKRVPMTNR) are extracellular. N-linked (GlcNAc...) asparagine glycosylation occurs at Asn22. Residues 45–71 (QAVVVFYALVFLLSLLGNSLVMLVILY) form a helical membrane-spanning segment. Residues 72–80 (RRRTRSVTD) are Cytoplasmic-facing. The helical transmembrane segment at 81-101 (VYVLNLAIADLLFSLTLPFLA) threads the bilayer. The Extracellular segment spans residues 102 to 116 (VSKWKGWIFGTPLCK). Cys115 and Cys192 are joined by a disulfide. Residues 117–138 (MVSLLKEVNFFSGILLLACISV) traverse the membrane as a helical segment. The Cytoplasmic segment spans residues 139–159 (DRYLAIVHATRTLTRKRYLVK). The helical transmembrane segment at 160-179 (FVCMGTWGLSLVLSLPFAIF) threads the bilayer. Residues 180 to 204 (RQAYKPYRSGTVCYEVLGEATADLR) are Extracellular-facing. The helical transmembrane segment at 205–225 (ITLRGLSHIFGFLLPLFIMLV) threads the bilayer. Residues 226–247 (CYGLTLRTLFKAHMRQKRRAMW) are Cytoplasmic-facing. The helical transmembrane segment at 248 to 269 (VIFAVVLVFLLCCLPYNLVLLS) threads the bilayer. Topologically, residues 270–290 (DTLLGAHLIQDTCERRNNIDQ) are extracellular. The chain crosses the membrane as a helical span at residues 291-313 (ALYITEILGFSHSCLNPVIYAFV). Residues 314–349 (GQSFRHEFLKILANLVHKEVLTHHSASFRTSLTTIY) lie on the Cytoplasmic side of the membrane.

This sequence belongs to the G-protein coupled receptor 1 family. As to quaternary structure, interacts with IL8. Interacts with GNAI2.

It localises to the cell membrane. Functionally, receptor to interleukin-8, which is a powerful neutrophils chemotactic factor. Binding of IL-8 to the receptor causes activation of neutrophils. This response is mediated via a G-protein that activates a phosphatidylinositol-calcium second messenger system. This is C-X-C chemokine receptor type 1 (Cxcr1) from Rattus norvegicus (Rat).